Consider the following 346-residue polypeptide: Cyclin-dependent kinase 7 (346 aa).

A2 carries the N-acetylalanine modification. Position 7 is a phosphoserine (S7). Residues 12–295 form the Protein kinase domain; that stretch reads YEKLDFLGEG…ASQALKTKYF (284 aa). Residues 18–26 and K41 contribute to the ATP site; that span reads LGEGQFATV. D137 serves as the catalytic Proton acceptor. Phosphoserine; by CDK1 and CDK2 is present on S164. T170 carries the phosphothreonine; by CDK2 modification.

It belongs to the protein kinase superfamily. CMGC Ser/Thr protein kinase family. CDC2/CDKX subfamily. As to quaternary structure, associates primarily with cyclin-H (CCNH) and MAT1 to form the CAK complex. CAK can further associate with the core-TFIIH to form the TFIIH basal transcription factor; this complex is sensitive to UV light. The CAK complex binds to p53/TP53 in response to DNA damage. Interacts with CDK2, SF1/NR5A1, PUF60 and PRKCI. Interacts with HINT1. Post-translationally, phosphorylation of Ser-164 during mitosis inactivates the enzyme. Phosphorylation of Thr-170 is required for activity. Phosphorylated at Ser-164 and Thr-170 by CDK2.

Its subcellular location is the nucleus. It localises to the cytoplasm. The protein localises to the perinuclear region. The catalysed reaction is L-seryl-[protein] + ATP = O-phospho-L-seryl-[protein] + ADP + H(+). It catalyses the reaction L-threonyl-[protein] + ATP = O-phospho-L-threonyl-[protein] + ADP + H(+). The enzyme catalyses [DNA-directed RNA polymerase] + ATP = phospho-[DNA-directed RNA polymerase] + ADP + H(+). With respect to regulation, phosphorylation at Thr-170 is required for enzymatic activity. The association of p53/TP53 to the CAK complex in response to DNA damage reduces kinase activity toward CDK2 and RNA polymerase II repetitive C-terminal domain (CTD), thus stopping cell cycle progression. Serine/threonine kinase involved in cell cycle control and in RNA polymerase II-mediated RNA transcription. Cyclin-dependent kinases (CDKs) are activated by the binding to a cyclin and mediate the progression through the cell cycle. Each different complex controls a specific transition between 2 subsequent phases in the cell cycle. Required for both activation and complex formation of CDK1/cyclin-B during G2-M transition, and for activation of CDK2/cyclins during G1-S transition (but not complex formation). CDK7 is the catalytic subunit of the CDK-activating kinase (CAK) complex. Phosphorylates SPT5/SUPT5H, SF1/NR5A1, POLR2A, p53/TP53, CDK1, CDK2, CDK4, CDK6 and CDK11B/CDK11. Initiates transcription by RNA polymerase II by mediating phosphorylation of POLR2A at 'Ser-5' of the repetitive C-terminal domain (CTD) when POLR2A is in complex with DNA, promoting dissociation from DNA and initiation. CAK activates the cyclin-associated kinases CDK1, CDK2, CDK4 and CDK6 by threonine phosphorylation, thus regulating cell cycle progression. CAK complexed to the core-TFIIH basal transcription factor activates RNA polymerase II by serine phosphorylation of the CTD of POLR2A, allowing its escape from the promoter and elongation of the transcripts. Its expression and activity are constant throughout the cell cycle. Upon DNA damage, triggers p53/TP53 activation by phosphorylation, but is inactivated in turn by p53/TP53; this feedback loop may lead to an arrest of the cell cycle and of the transcription, helping in cell recovery, or to apoptosis. Required for DNA-bound peptides-mediated transcription and cellular growth inhibition. The polypeptide is Cyclin-dependent kinase 7 (Cdk7) (Mus musculus (Mouse)).